We begin with the raw amino-acid sequence, 461 residues long: Flavin-containing monooxygenase FMO GS-OX-like 8 (461 aa).

FAD is bound at residue 20-25 (GAGPSG). 220–225 (GCSMSG) contributes to the NADP(+) binding site.

The protein belongs to the FMO family. In terms of assembly, interacts with EER5. FAD is required as a cofactor.

Functionally, catalyzes the conversion of methylthioalkyl glucosinolates of any chain length into methylsulfinylalkyl glucosinolates. This chain is Flavin-containing monooxygenase FMO GS-OX-like 8, found in Arabidopsis thaliana (Mouse-ear cress).